We begin with the raw amino-acid sequence, 831 residues long: Multiphosphoryl transfer protein 1 (831 aa).

The HPr domain maps to 1–90 (MLTIQFLCPL…EYIQVRFIDS (90 aa)). His-15 serves as the catalytic Pros-phosphohistidine intermediate; for HPr activity. His-15 carries the phosphohistidine; by EI modification. Residues 119–650 (GNVLASGVGV…AVKSQLRQLD (532 aa)) are PTS EI. The active-site Tele-phosphohistidine intermediate; for PTS EI activity is the His-298. His-298 is subject to Phosphohistidine; by autocatalysis. Residues Arg-405 and Arg-441 each coordinate phosphoenolpyruvate. 2 residues coordinate Mg(2+): Glu-540 and Asp-564. Phosphoenolpyruvate contacts are provided by residues 563-564 (ND) and Arg-574. The active-site Proton donor; for EI activity is the Cys-611. In terms of domain architecture, PTS EIIA type-2 spans 685-828 (PLLALENIFV…QSILTLLETE (144 aa)). His-747 acts as the Tele-phosphohistidine intermediate; for PTS EIIA activity in catalysis. Phosphohistidine; by HPr is present on His-747.

This sequence belongs to the PEP-utilizing enzyme family. Requires Mg(2+) as cofactor.

The protein resides in the cytoplasm. The enzyme catalyses L-histidyl-[protein] + phosphoenolpyruvate = N(pros)-phospho-L-histidyl-[protein] + pyruvate. The catalysed reaction is D-fructose(out) + N(pros)-phospho-L-histidyl-[protein] = D-fructose 1-phosphate(in) + L-histidyl-[protein]. Multifunctional protein that includes general (non sugar-specific) and sugar-specific components of the phosphoenolpyruvate-dependent sugar phosphotransferase system (sugar PTS). This major carbohydrate active transport system catalyzes the phosphorylation of incoming sugar substrates concomitantly with their translocation across the cell membrane. The enzyme II FryABC PTS system is involved in fructose transport. The protein is Multiphosphoryl transfer protein 1 (fryA) of Escherichia coli (strain K12).